The chain runs to 78 residues: Biotin synthase auxiliary protein (78 aa).

Belongs to the BsaP family. It depends on iron-sulfur cluster as a cofactor.

In terms of biological role, required for the activity of the biotin synthase BioB. In Mycolicibacterium smegmatis (strain ATCC 700084 / mc(2)155) (Mycobacterium smegmatis), this protein is Biotin synthase auxiliary protein.